The chain runs to 56 residues: Small ribosomal subunit protein uS14 (56 aa).

Residues Cys21, Cys24, Cys39, and Cys42 each coordinate Zn(2+).

It belongs to the universal ribosomal protein uS14 family. In terms of assembly, component of the 40S small ribosomal subunit. Zn(2+) serves as cofactor.

The protein localises to the cytoplasm. It localises to the cytosol. It is found in the rough endoplasmic reticulum. This Bombyx mori (Silk moth) protein is Small ribosomal subunit protein uS14 (RpS29).